Reading from the N-terminus, the 430-residue chain is Adenylosuccinate synthetase (430 aa).

GTP-binding positions include 13–19 (GDEGKGK) and 41–43 (GHT). Asp14 (proton acceptor) is an active-site residue. Mg(2+)-binding residues include Asp14 and Gly41. Residues 14–17 (DEGK), 39–42 (NAGH), Thr130, Arg144, Gln225, Thr240, and Arg304 each bind IMP. Catalysis depends on His42, which acts as the Proton donor. 300 to 306 (ATTGRAR) serves as a coordination point for substrate. Residues Arg306, 332–334 (KLD), and 414–416 (STG) contribute to the GTP site.

It belongs to the adenylosuccinate synthetase family. Homodimer. It depends on Mg(2+) as a cofactor.

It is found in the cytoplasm. The enzyme catalyses IMP + L-aspartate + GTP = N(6)-(1,2-dicarboxyethyl)-AMP + GDP + phosphate + 2 H(+). Its pathway is purine metabolism; AMP biosynthesis via de novo pathway; AMP from IMP: step 1/2. Plays an important role in the de novo pathway of purine nucleotide biosynthesis. Catalyzes the first committed step in the biosynthesis of AMP from IMP. The protein is Adenylosuccinate synthetase of Pseudomonas aeruginosa (strain LESB58).